A 238-amino-acid chain; its full sequence is Histidine/lysine/arginine/ornithine transport system permease protein HisM (238 aa).

At 1–26 (MIEILHEYWKPLLWTDGYRFTGVAIT) the chain is on the periplasmic side. Positions 23 to 221 (VAITLWLLIL…IISYVLISLF (199 aa)) constitute an ABC transmembrane type-1 domain. A helical membrane pass occupies residues 27-47 (LWLLILSVVIGGVLALFLAIG). Residues 48–58 (RVSSNKYIQFP) are Cytoplasmic-facing. The helical transmembrane segment at 59 to 79 (IWLFTYIFRGTPLYVQLLVFY) threads the bilayer. Over 80–104 (SGMYTLEIVKGTEFLNAFFRSGLNC) the chain is Periplasmic. The chain crosses the membrane as a helical span at residues 105–125 (TVLALTLNTCAYTTEIFAGAI). Topologically, residues 126–157 (RSVPHGEIEAARAYGFSTFKMYRCIILPSALR) are cytoplasmic. A helical membrane pass occupies residues 158-178 (IALPAYSNEVILMLHSTALAF). The Periplasmic segment spans residues 179–199 (TATVPDLLKIARDINAATYQP). The helical transmembrane segment at 200 to 220 (FTAFGIAAVLYLIISYVLISL) threads the bilayer. The Cytoplasmic portion of the chain corresponds to 221-238 (FRRAEKRWLQHVKPSSTH).

This sequence belongs to the binding-protein-dependent transport system permease family. HisMQ subfamily. As to quaternary structure, the HisPMQJ complex is composed of two ATP-binding proteins (HisP), two transmembrane proteins (HisM and HisQ) and a solute-binding protein (HisJ). The HisPMQ-ArgT complex is composed of two ATP-binding proteins (HisP), two transmembrane proteins (HisM and HisQ) and a solute-binding protein (ArgT).

Its subcellular location is the cell inner membrane. Functionally, part of the ABC transporter complex HisPMQJ involved in histidine transport. Is also part of the ABC transporter complex HisPMQ-ArgT involved in lysine/arginine/ornithine transport. Probably responsible for the translocation of the substrate across the membrane. This Escherichia coli O157:H7 protein is Histidine/lysine/arginine/ornithine transport system permease protein HisM (hisM).